Reading from the N-terminus, the 523-residue chain is Melanoma-associated antigen E2 (523 aa).

2 consecutive MAGE domains span residues Leu88–Ala288 and Met311–Ala502.

The chain is Melanoma-associated antigen E2 (MAGEE2) from Homo sapiens (Human).